A 181-amino-acid chain; its full sequence is Adenylate kinase 2 (181 aa).

10-15 is an ATP binding site; it reads GSGKST. The NMP stretch occupies residues 30–59; the sequence is SMGGILREAIANATPLGIKAKPYVERGDLL. AMP is bound by residues Arg-36, 57–59, 85–88, and Gln-92; these read DLL and GYPR. The LID stretch occupies residues 126 to 132; it reads NRSLFDD. Arg-127 provides a ligand contact to ATP. Arg-140 serves as a coordination point for AMP. Pro-168 is a binding site for ATP.

This sequence belongs to the adenylate kinase family. As to quaternary structure, monomer.

The protein resides in the cytoplasm. It carries out the reaction AMP + ATP = 2 ADP. It functions in the pathway purine metabolism; AMP biosynthesis via salvage pathway; AMP from ADP: step 1/1. Functionally, catalyzes the reversible transfer of the terminal phosphate group between ATP and AMP. Plays an important role in cellular energy homeostasis and in adenine nucleotide metabolism. This chain is Adenylate kinase 2, found in Synechocystis sp. (strain ATCC 27184 / PCC 6803 / Kazusa).